A 302-amino-acid chain; its full sequence is tRNA pseudouridine synthase B (302 aa).

Catalysis depends on D38, which acts as the Nucleophile.

Belongs to the pseudouridine synthase TruB family. Type 1 subfamily.

The enzyme catalyses uridine(55) in tRNA = pseudouridine(55) in tRNA. In terms of biological role, responsible for synthesis of pseudouridine from uracil-55 in the psi GC loop of transfer RNAs. The sequence is that of tRNA pseudouridine synthase B from Geobacillus thermodenitrificans (strain NG80-2).